A 297-amino-acid polypeptide reads, in one-letter code: N-acetylneuraminate lyase (297 aa).

Residues Ser-47 and Thr-48 each contribute to the aceneuramate site. The active-site Proton donor is the Tyr-137. Residue Lys-165 is the Schiff-base intermediate with substrate of the active site. Thr-167, Gly-189, Asp-191, Glu-192, and Ser-208 together coordinate aceneuramate.

The protein belongs to the DapA family. NanA subfamily. In terms of assembly, homotetramer.

Its subcellular location is the cytoplasm. It catalyses the reaction aceneuramate = aldehydo-N-acetyl-D-mannosamine + pyruvate. It functions in the pathway amino-sugar metabolism; N-acetylneuraminate degradation; D-fructose 6-phosphate from N-acetylneuraminate: step 1/5. Functionally, catalyzes the reversible aldol cleavage of N-acetylneuraminic acid (sialic acid; Neu5Ac) to form pyruvate and N-acetylmannosamine (ManNAc) via a Schiff base intermediate. This chain is N-acetylneuraminate lyase, found in Escherichia coli (strain SE11).